The following is a 337-amino-acid chain: Phosphate acyltransferase (337 aa).

It belongs to the PlsX family. As to quaternary structure, homodimer. Probably interacts with PlsY.

The protein resides in the cytoplasm. The enzyme catalyses a fatty acyl-[ACP] + phosphate = an acyl phosphate + holo-[ACP]. The protein operates within lipid metabolism; phospholipid metabolism. Catalyzes the reversible formation of acyl-phosphate (acyl-PO(4)) from acyl-[acyl-carrier-protein] (acyl-ACP). This enzyme utilizes acyl-ACP as fatty acyl donor, but not acyl-CoA. This is Phosphate acyltransferase from Ehrlichia chaffeensis (strain ATCC CRL-10679 / Arkansas).